The following is a 142-amino-acid chain: Universal stress protein C (142 aa).

This sequence belongs to the universal stress protein A family.

The protein resides in the cytoplasm. Its function is as follows. Required for resistance to DNA-damaging agents. This chain is Universal stress protein C (uspC), found in Escherichia coli O157:H7.